We begin with the raw amino-acid sequence, 838 residues long: G-protein coupled receptor-associated sorting protein 2 (838 aa).

Disordered stretches follow at residues 1 to 121 (MTGA…PGAR), 218 to 293 (ASNE…NPFS), and 531 to 552 (LELS…PSPE). Residues 13 to 31 (KPEKKAGEEVVAGPEREND) show a composition bias toward basic and acidic residues. The segment covering 220 to 235 (NESGFWSADETSTASS) has biased composition (polar residues). The span at 255–271 (RSRHRAKHQTNPRSRPR) shows a compositional bias: basic residues. Phosphoserine occurs at positions 282 and 284. Residues 542 to 552 (SLLQPDQPSPE) show a composition bias toward polar residues.

This sequence belongs to the GPRASP family. As to quaternary structure, interacts with cytoplasmic tails of a variety of G protein-coupled receptors such as muscarinic acetylcholine receptor M1/CHRM1 and calcitonin receptor/CALCR.

Its function is as follows. May play a role in regulation of a variety of G-protein coupled receptors. This Pongo abelii (Sumatran orangutan) protein is G-protein coupled receptor-associated sorting protein 2 (GPRASP2).